The primary structure comprises 259 residues: Thiazole synthase (259 aa).

Lys-95 functions as the Schiff-base intermediate with DXP in the catalytic mechanism. 1-deoxy-D-xylulose 5-phosphate-binding positions include Gly-156, 183-184, and 205-206; these read AG and NS.

The protein belongs to the ThiG family. Homotetramer. Forms heterodimers with either ThiH or ThiS.

The protein localises to the cytoplasm. It carries out the reaction [ThiS sulfur-carrier protein]-C-terminal-Gly-aminoethanethioate + 2-iminoacetate + 1-deoxy-D-xylulose 5-phosphate = [ThiS sulfur-carrier protein]-C-terminal Gly-Gly + 2-[(2R,5Z)-2-carboxy-4-methylthiazol-5(2H)-ylidene]ethyl phosphate + 2 H2O + H(+). Its pathway is cofactor biosynthesis; thiamine diphosphate biosynthesis. Its function is as follows. Catalyzes the rearrangement of 1-deoxy-D-xylulose 5-phosphate (DXP) to produce the thiazole phosphate moiety of thiamine. Sulfur is provided by the thiocarboxylate moiety of the carrier protein ThiS. In vitro, sulfur can be provided by H(2)S. In Coxiella burnetii (strain RSA 331 / Henzerling II), this protein is Thiazole synthase.